Reading from the N-terminus, the 255-residue chain is (R)-S-adenosyl-L-methionine hydrolase (255 aa).

Residues aspartate 9, aspartate 70, and asparagine 186 each coordinate adenosine. Asparagine 186, serine 227, glutamate 232, and valine 235 together coordinate (R)-S-adenosyl-L-methionine. Valine 235 contacts adenosine.

Belongs to the SAM hydrolase / SAM-dependent halogenase family. As to quaternary structure, homotrimer.

It carries out the reaction (R)-S-adenosyl-L-methionine + H2O = adenosine + L-methionine + H(+). Functionally, catalyzes the hydrolysis of S-adenosyl-L-methionine (SAM) into adenosine and L-methionine. Does not have chlorinase or fluorinase activity. In Thermus thermophilus (strain ATCC 27634 / DSM 579 / HB8), this protein is (R)-S-adenosyl-L-methionine hydrolase.